The following is a 355-amino-acid chain: Protein RecA (355 aa).

73–80 (GPESSGKT) contributes to the ATP binding site.

It belongs to the RecA family.

It localises to the cytoplasm. Functionally, can catalyze the hydrolysis of ATP in the presence of single-stranded DNA, the ATP-dependent uptake of single-stranded DNA by duplex DNA, and the ATP-dependent hybridization of homologous single-stranded DNAs. It interacts with LexA causing its activation and leading to its autocatalytic cleavage. The protein is Protein RecA of Solidesulfovibrio magneticus (strain ATCC 700980 / DSM 13731 / RS-1) (Desulfovibrio magneticus).